Here is a 546-residue protein sequence, read N- to C-terminus: Chaperonin GroEL (546 aa).

ATP contacts are provided by residues 30 to 33 (TLGP), K51, 87 to 91 (DGTTT), G415, 479 to 481 (NAA), and D495. The segment at 526–546 (KKDEPAMPAGGGMGGMGGMDF) is disordered. Gly residues predominate over residues 534-546 (AGGGMGGMGGMDF).

It belongs to the chaperonin (HSP60) family. Forms a cylinder of 14 subunits composed of two heptameric rings stacked back-to-back. Interacts with the co-chaperonin GroES.

The protein localises to the cytoplasm. The enzyme catalyses ATP + H2O + a folded polypeptide = ADP + phosphate + an unfolded polypeptide.. In terms of biological role, together with its co-chaperonin GroES, plays an essential role in assisting protein folding. The GroEL-GroES system forms a nano-cage that allows encapsulation of the non-native substrate proteins and provides a physical environment optimized to promote and accelerate protein folding. The chain is Chaperonin GroEL from Xanthomonas euvesicatoria pv. vesicatoria (strain 85-10) (Xanthomonas campestris pv. vesicatoria).